A 256-amino-acid polypeptide reads, in one-letter code: 3-deoxy-manno-octulosonate cytidylyltransferase (256 aa).

Belongs to the KdsB family.

It localises to the cytoplasm. The catalysed reaction is 3-deoxy-alpha-D-manno-oct-2-ulosonate + CTP = CMP-3-deoxy-beta-D-manno-octulosonate + diphosphate. It participates in nucleotide-sugar biosynthesis; CMP-3-deoxy-D-manno-octulosonate biosynthesis; CMP-3-deoxy-D-manno-octulosonate from 3-deoxy-D-manno-octulosonate and CTP: step 1/1. It functions in the pathway bacterial outer membrane biogenesis; lipopolysaccharide biosynthesis. Activates KDO (a required 8-carbon sugar) for incorporation into bacterial lipopolysaccharide in Gram-negative bacteria. In Histophilus somni (strain 2336) (Haemophilus somnus), this protein is 3-deoxy-manno-octulosonate cytidylyltransferase.